A 228-amino-acid polypeptide reads, in one-letter code: Histidine/lysine/arginine/ornithine transport system permease protein HisQ (228 aa).

Topologically, residues 1–12 are periplasmic; that stretch reads MLYGFSGVILQG. The helical transmembrane segment at 13–33 threads the bilayer; the sequence is ALVTLELAISSVVLAVIIGLI. The region spanning 13 to 212 is the ABC transmembrane type-1 domain; the sequence is ALVTLELAIS…VFTTVSNGVL (200 aa). The Cytoplasmic segment spans residues 34–58; it reads GAGGKLSQNRLSGLIFEGYTTLIRG. The chain crosses the membrane as a helical span at residues 59-79; the sequence is VPDLVLMLLIFYGLQIALNTV. Residues 80-87 are Periplasmic-facing; that stretch reads TEAMGVGQ. The chain crosses the membrane as a helical span at residues 88-108; that stretch reads IDIDPMVAGIITLGFIYGAYF. Over 109 to 148 the chain is Cytoplasmic; that stretch reads TETFRGAFMAVPKGHIEAATAFGFTRGQVFRRIMFPSMMR. A helical membrane pass occupies residues 149 to 171; it reads YALPGIGNNWQVILKSTALVSLL. Residues 172 to 194 lie on the Periplasmic side of the membrane; it reads GLEDVVKATQLAGKSTWEPFYFA. Residues 195–215 traverse the membrane as a helical segment; the sequence is IVCGVIYLVFTTVSNGVLLFL. Residues 216-228 are Cytoplasmic-facing; sequence ERRYSVGVKRADL.

The protein belongs to the binding-protein-dependent transport system permease family. HisMQ subfamily. In terms of assembly, the HisPMQJ complex is composed of two ATP-binding proteins (HisP), two transmembrane proteins (HisM and HisQ) and a solute-binding protein (HisJ). The HisPMQ-ArgT complex is composed of two ATP-binding proteins (HisP), two transmembrane proteins (HisM and HisQ) and a solute-binding protein (ArgT).

It is found in the cell inner membrane. Functionally, part of the ABC transporter complex HisPMQJ involved in histidine transport. Is also part of the ABC transporter complex HisPMQ-ArgT involved in lysine/arginine/ornithine transport. Probably responsible for the translocation of the substrate across the membrane. The polypeptide is Histidine/lysine/arginine/ornithine transport system permease protein HisQ (hisQ) (Escherichia coli (strain K12)).